Here is a 376-residue protein sequence, read N- to C-terminus: O-demethylpuromycin-O-methyltransferase (376 aa).

The segment at M1–H28 is disordered. Residues E19–H28 show a composition bias toward basic and acidic residues. Residues D235 and G261 to F263 contribute to the S-adenosyl-L-methionine site. H281 functions as the Proton acceptor in the catalytic mechanism.

It belongs to the class I-like SAM-binding methyltransferase superfamily. Cation-independent O-methyltransferase family.

The enzyme catalyses O-demethylpuromycin + S-adenosyl-L-methionine = puromycin + S-adenosyl-L-homocysteine + H(+). This Streptomyces alboniger protein is O-demethylpuromycin-O-methyltransferase (dmpM).